A 1074-amino-acid chain; its full sequence is Phospholipase D1 (1074 aa).

A PX domain is found at 81–212; that stretch reads VKAQVLEVER…TEFLDVSQLS (132 aa). The 110-residue stretch at 219–328 folds into the PH domain; it reads PKGLEGMIMK…WGGAIEEFIQ (110 aa). 2 S-palmitoyl cysteine lipidation sites follow: Cys240 and Cys241. The 28-residue stretch at 459 to 486 folds into the PLD phosphodiesterase 1 domain; the sequence is YLWAHHEKLVIIDQSVAFVGGIDLAYGR. Residues 463–928 form a catalytic region; that stretch reads HHEKLVIIDQ…MLGKRDSEMA (466 aa). Phosphoserine is present on residues Ser499, Ser561, and Ser629. The PLD phosphodiesterase 2 domain maps to 891–918; the sequence is ELIYVHSKLLIADDNTVIIGSANINDRS.

It belongs to the phospholipase D family. In terms of assembly, interacts with PIP5K1B. Post-translationally, phosphorylated on serine and threonine residues. In terms of processing, it is uncertain whether palmitoylation is on Cys-240 and/or Cys-241. Palmitoylation is required prior to phosphorylation.

It localises to the cytoplasm. Its subcellular location is the perinuclear region. The protein localises to the endoplasmic reticulum membrane. The protein resides in the golgi apparatus membrane. It is found in the late endosome membrane. It catalyses the reaction a 1,2-diacyl-sn-glycero-3-phosphocholine + H2O = a 1,2-diacyl-sn-glycero-3-phosphate + choline + H(+). The catalysed reaction is ethanol + a 1,2-diacyl-sn-glycero-3-phosphocholine = 1,2-diacyl-sn-glycero-3-phosphoethanol + choline. It carries out the reaction 1,2-dihexadecanoyl-sn-glycero-3-phosphocholine + H2O = 1,2-dihexadecanoyl-sn-glycero-3-phosphate + choline + H(+). Stimulated by phosphatidylinositol 4,5-bisphosphate and phosphatidylinositol 3,4,5-trisphosphate, activated by the phosphokinase C-alpha, by the ADP-ribosylation factor-1 (ARF-1), and to a lesser extent by GTP-binding proteins: RHO A, RAC-1 and CDC42. Inhibited by oleate. Its function is as follows. Function as phospholipase selective for phosphatidylcholine. Implicated as a critical step in numerous cellular pathways, including signal transduction, membrane trafficking, and the regulation of mitosis. May be involved in the regulation of perinuclear intravesicular membrane traffic. This chain is Phospholipase D1, found in Rattus norvegicus (Rat).